Here is a 176-residue protein sequence, read N- to C-terminus: ATP-dependent protease subunit HslV (176 aa).

Residue Thr-2 is part of the active site. The Na(+) site is built by Gly-157, Cys-160, and Thr-163.

It belongs to the peptidase T1B family. HslV subfamily. A double ring-shaped homohexamer of HslV is capped on each side by a ring-shaped HslU homohexamer. The assembly of the HslU/HslV complex is dependent on binding of ATP.

It localises to the cytoplasm. The enzyme catalyses ATP-dependent cleavage of peptide bonds with broad specificity.. With respect to regulation, allosterically activated by HslU binding. Its function is as follows. Protease subunit of a proteasome-like degradation complex believed to be a general protein degrading machinery. The protein is ATP-dependent protease subunit HslV of Escherichia coli O45:K1 (strain S88 / ExPEC).